Here is a 595-residue protein sequence, read N- to C-terminus: Aspartate--tRNA ligase (595 aa).

E180 serves as a coordination point for L-aspartate. Residues 204 to 207 are aspartate; that stretch reads QLFK. R226 is a binding site for L-aspartate. ATP is bound by residues 226–228 and Q235; that span reads RDE. Residue H454 participates in L-aspartate binding. E488 serves as a coordination point for ATP. An L-aspartate-binding site is contributed by R495. 540 to 543 lines the ATP pocket; that stretch reads GLDR.

This sequence belongs to the class-II aminoacyl-tRNA synthetase family. Type 1 subfamily. In terms of assembly, homodimer.

It is found in the cytoplasm. It carries out the reaction tRNA(Asp) + L-aspartate + ATP = L-aspartyl-tRNA(Asp) + AMP + diphosphate. Its function is as follows. Catalyzes the attachment of L-aspartate to tRNA(Asp) in a two-step reaction: L-aspartate is first activated by ATP to form Asp-AMP and then transferred to the acceptor end of tRNA(Asp). This Clostridium acetobutylicum (strain ATCC 824 / DSM 792 / JCM 1419 / IAM 19013 / LMG 5710 / NBRC 13948 / NRRL B-527 / VKM B-1787 / 2291 / W) protein is Aspartate--tRNA ligase.